Here is a 398-residue protein sequence, read N- to C-terminus: MALSANSDAVTYAKAANTRTAAETGDRIEWVKLSLAFLPLATPVSDAKVLTGRQKPLTEVAIIIAEIRSRDGFEGVGFSYSKRAGGQGIYAHAKEIADNLLGEDPNDIDKIYTKLLWAGASVGRSGMAVQAISPIDIALWDMKAKRAGLPLAKLLGAHRDSVQCYNTSGGFLHTPLDQVLKNVVISRENGIGGIKLKVGQPNCAEDIRRLTAVREALGDEFPLMVDANQQWDRETAIRMGRKMEQFNLIWIEEPLDAYDIEGHAQLAAALDTPIATGEMLTSFREHEQLILGNASDFVQPDAPRVGGISPFLKIMDLAAKHGRKLAPHFAMEVHLHLSAAYPLEPWLEHFEWLNPLFNEQLELRDGRMWISDRHGLGFTLSEQARRWTQLTCEFGKRP.

Substrate contacts are provided by residues Asp-46–Lys-48, Lys-82–Arg-83, and Lys-195. The active-site Proton acceptor is Lys-197. Asp-226 serves as a coordination point for Mg(2+). Residue Asn-228 coordinates substrate. Mg(2+) is bound by residues Glu-252 and Glu-278. The Proton donor/acceptor role is filled by His-328. A substrate-binding site is contributed by Glu-348.

The protein belongs to the mandelate racemase/muconate lactonizing enzyme family. In terms of assembly, homooctamer; tetramer of dimers. Requires Mg(2+) as cofactor.

It carries out the reaction L-altrarate = 5-dehydro-4-deoxy-D-glucarate + H2O. It catalyses the reaction galactarate = 5-dehydro-4-deoxy-D-glucarate + H2O. The catalysed reaction is L-altrarate = galactarate. Competitively inhibited by tartronate. Catalyzes the efficient dehydration of both L-talarate (also called L-altrarate) and galactarate to 5-keto-4-deoxy-D-glucarate (5-KDG). Also catalyzes the epimerization of L-talarate to galactarate; epimerization occurs in competition with dehydration. Is required for the utilization of L-talarate as a carbon source. Also functions in galactarate utilization. Is not active on other acid sugars. The chain is L-talarate/galactarate dehydratase from Salmonella typhimurium (strain LT2 / SGSC1412 / ATCC 700720).